The chain runs to 129 residues: Large-conductance mechanosensitive channel (129 aa).

The next 3 helical transmembrane spans lie at 14 to 34 (IIDLAVAVVIGGAFGKIVTSL), 38 to 58 (IIMPLVGVLTGGIDLTASFVY), and 67 to 87 (LGVFLQSIIDFLIIAFAIFMA).

Belongs to the MscL family. In terms of assembly, homopentamer.

It is found in the cell membrane. Channel that opens in response to stretch forces in the membrane lipid bilayer. May participate in the regulation of osmotic pressure changes within the cell. This chain is Large-conductance mechanosensitive channel, found in Lysinibacillus sphaericus (strain C3-41).